A 370-amino-acid chain; its full sequence is 3-dehydroquinate synthase (370 aa).

Residues 107 to 111 (GVIGD), 131 to 132 (TS), K144, and K153 each bind NAD(+). Residues E186, H249, and H267 each contribute to the Zn(2+) site.

It belongs to the sugar phosphate cyclases superfamily. Dehydroquinate synthase family. The cofactor is Co(2+). Zn(2+) serves as cofactor. Requires NAD(+) as cofactor.

The protein localises to the cytoplasm. The enzyme catalyses 7-phospho-2-dehydro-3-deoxy-D-arabino-heptonate = 3-dehydroquinate + phosphate. It participates in metabolic intermediate biosynthesis; chorismate biosynthesis; chorismate from D-erythrose 4-phosphate and phosphoenolpyruvate: step 2/7. Functionally, catalyzes the conversion of 3-deoxy-D-arabino-heptulosonate 7-phosphate (DAHP) to dehydroquinate (DHQ). The protein is 3-dehydroquinate synthase of Ruegeria pomeroyi (strain ATCC 700808 / DSM 15171 / DSS-3) (Silicibacter pomeroyi).